A 208-amino-acid chain; its full sequence is Uracil phosphoribosyltransferase (208 aa).

5-phospho-alpha-D-ribose 1-diphosphate contacts are provided by residues arginine 78, arginine 103, and 130 to 138 (DPMLATGGS). Residues isoleucine 193 and 198–200 (GDA) contribute to the uracil site. Aspartate 199 is a 5-phospho-alpha-D-ribose 1-diphosphate binding site.

It belongs to the UPRTase family. Requires Mg(2+) as cofactor.

It carries out the reaction UMP + diphosphate = 5-phospho-alpha-D-ribose 1-diphosphate + uracil. It participates in pyrimidine metabolism; UMP biosynthesis via salvage pathway; UMP from uracil: step 1/1. Allosterically activated by GTP. Functionally, catalyzes the conversion of uracil and 5-phospho-alpha-D-ribose 1-diphosphate (PRPP) to UMP and diphosphate. This chain is Uracil phosphoribosyltransferase, found in Shewanella putrefaciens (strain CN-32 / ATCC BAA-453).